A 199-amino-acid polypeptide reads, in one-letter code: Ribosome maturation factor RimM (199 aa).

In terms of domain architecture, PRC barrel spans 100–195 (ADEWYPKDLI…YLTLDPPGGL (96 aa)).

It belongs to the RimM family. In terms of assembly, binds ribosomal protein uS19.

It localises to the cytoplasm. In terms of biological role, an accessory protein needed during the final step in the assembly of 30S ribosomal subunit, possibly for assembly of the head region. Essential for efficient processing of 16S rRNA. May be needed both before and after RbfA during the maturation of 16S rRNA. It has affinity for free ribosomal 30S subunits but not for 70S ribosomes. The protein is Ribosome maturation factor RimM of Bifidobacterium longum (strain DJO10A).